The chain runs to 172 residues: Translation initiation factor IF-3 (172 aa).

The protein belongs to the IF-3 family. As to quaternary structure, monomer.

It localises to the cytoplasm. In terms of biological role, IF-3 binds to the 30S ribosomal subunit and shifts the equilibrium between 70S ribosomes and their 50S and 30S subunits in favor of the free subunits, thus enhancing the availability of 30S subunits on which protein synthesis initiation begins. This is Translation initiation factor IF-3 from Geobacillus stearothermophilus (Bacillus stearothermophilus).